A 191-amino-acid polypeptide reads, in one-letter code: Elongation factor P-like protein (191 aa).

This sequence belongs to the elongation factor P family.

The chain is Elongation factor P-like protein from Photobacterium profundum (strain SS9).